We begin with the raw amino-acid sequence, 536 residues long: Inactive beta-amylase 9 (536 aa).

The residue at position 47 (S47) is a Phosphoserine. Residues 511 to 536 form a disordered region; the sequence is QASEAEVEAETASIGSGTGAPSLQTA.

This sequence belongs to the glycosyl hydrolase 14 family. As to expression, mostly expressed in young floral buds, flowers and roots, and, to a later extent, in stems and leaves.

The protein resides in the cytoplasm. This Arabidopsis thaliana (Mouse-ear cress) protein is Inactive beta-amylase 9 (BAM9).